A 392-amino-acid polypeptide reads, in one-letter code: DNA polymerase IV (392 aa).

Residues 6-186 form the UmuC domain; it reads IVHLDADAFF…LPIGKLPGVG (181 aa). Positions 10 and 103 each coordinate Mg(2+). E104 is an active-site residue.

This sequence belongs to the DNA polymerase type-Y family. Monomer. The cofactor is Mg(2+).

The protein localises to the cytoplasm. It carries out the reaction DNA(n) + a 2'-deoxyribonucleoside 5'-triphosphate = DNA(n+1) + diphosphate. Functionally, poorly processive, error-prone DNA polymerase involved in untargeted mutagenesis. Copies undamaged DNA at stalled replication forks, which arise in vivo from mismatched or misaligned primer ends. These misaligned primers can be extended by PolIV. Exhibits no 3'-5' exonuclease (proofreading) activity. May be involved in translesional synthesis, in conjunction with the beta clamp from PolIII. In Opitutus terrae (strain DSM 11246 / JCM 15787 / PB90-1), this protein is DNA polymerase IV.